Consider the following 249-residue polypeptide: Small ribosomal subunit protein uS3 (249 aa).

The region spanning 38 to 106 is the KH type-2 domain; the sequence is IRDFLSKGLE…QVQLNILEVK (69 aa). Basic and acidic residues predominate over residues 218–233; the sequence is ARDDRGSRRGRNDRPR. Residues 218 to 249 are disordered; that stretch reads ARDDRGSRRGRNDRPRRGGGRRRRAAEQKQEG.

It belongs to the universal ribosomal protein uS3 family. As to quaternary structure, part of the 30S ribosomal subunit. Forms a tight complex with proteins S10 and S14.

Its function is as follows. Binds the lower part of the 30S subunit head. Binds mRNA in the 70S ribosome, positioning it for translation. This chain is Small ribosomal subunit protein uS3, found in Corynebacterium kroppenstedtii (strain DSM 44385 / JCM 11950 / CIP 105744 / CCUG 35717).